The primary structure comprises 262 residues: MQRYNKLLGQHFIYDREVLDKIIDAATSVKGKHIFEIGAGSGTLSAAILLREPASLISVEKDKRFSESLSSLMAQYQNYKYTIGDALLIRLSSLFKQEKVTIIANLPYNIATHLLLGWMNELEQVREMVLMFQKEVADRICAQPKSKNYGALSVLVQLECKAESQFALAPEVFTPPPRVTSTVLKLTPLKNKWPRNKPVLEKILTEGFSQRRKMIKKSLSRIFKDSEALHSALAQVGASPTMRIEELNPEQLCRLSCIAEMD.

The S-adenosyl-L-methionine site is built by His11, Ile13, Gly38, Glu60, Asp85, and Asn105.

The protein belongs to the class I-like SAM-binding methyltransferase superfamily. rRNA adenine N(6)-methyltransferase family. RsmA subfamily.

It localises to the cytoplasm. It carries out the reaction adenosine(1518)/adenosine(1519) in 16S rRNA + 4 S-adenosyl-L-methionine = N(6)-dimethyladenosine(1518)/N(6)-dimethyladenosine(1519) in 16S rRNA + 4 S-adenosyl-L-homocysteine + 4 H(+). In terms of biological role, specifically dimethylates two adjacent adenosines (A1518 and A1519) in the loop of a conserved hairpin near the 3'-end of 16S rRNA in the 30S particle. May play a critical role in biogenesis of 30S subunits. This chain is Ribosomal RNA small subunit methyltransferase A, found in Neorickettsia sennetsu (strain ATCC VR-367 / Miyayama) (Ehrlichia sennetsu).